Reading from the N-terminus, the 179-residue chain is Alpha-tubulin N-acetyltransferase (179 aa).

The region spanning 1–175 (MRVEVVRAPG…NRFVVFDAYF (175 aa)) is the N-acetyltransferase domain. Residues 109-122 (FYVD…GVGL) and 145-154 (SPKLFAFLKK) each bind acetyl-CoA.

This sequence belongs to the acetyltransferase ATAT1 family.

The catalysed reaction is L-lysyl-[alpha-tubulin] + acetyl-CoA = N(6)-acetyl-L-lysyl-[alpha-tubulin] + CoA + H(+). Functionally, specifically acetylates 'Lys-40' in alpha-tubulin on the lumenal side of microtubules. Promotes microtubule destabilization and accelerates microtubule dynamics; this activity may be independent of acetylation activity. Acetylates alpha-tubulin with a slow enzymatic rate, due to a catalytic site that is not optimized for acetyl transfer. Enters the microtubule through each end and diffuses quickly throughout the lumen of microtubules. Acetylates only long/old microtubules because of its slow acetylation rate since it does not have time to act on dynamically unstable microtubules before the enzyme is released. The protein is Alpha-tubulin N-acetyltransferase of Phytophthora infestans (strain T30-4) (Potato late blight agent).